The sequence spans 410 residues: Gamma-glutamyl phosphate reductase (410 aa).

This sequence belongs to the gamma-glutamyl phosphate reductase family.

It localises to the cytoplasm. It carries out the reaction L-glutamate 5-semialdehyde + phosphate + NADP(+) = L-glutamyl 5-phosphate + NADPH + H(+). Its pathway is amino-acid biosynthesis; L-proline biosynthesis; L-glutamate 5-semialdehyde from L-glutamate: step 2/2. In terms of biological role, catalyzes the NADPH-dependent reduction of L-glutamate 5-phosphate into L-glutamate 5-semialdehyde and phosphate. The product spontaneously undergoes cyclization to form 1-pyrroline-5-carboxylate. In Sulfurimonas denitrificans (strain ATCC 33889 / DSM 1251) (Thiomicrospira denitrificans (strain ATCC 33889 / DSM 1251)), this protein is Gamma-glutamyl phosphate reductase.